The sequence spans 273 residues: Protein E6 (273 aa).

Zinc fingers lie at residues Cys27–Cys63 and Cys100–Cys140.

The protein belongs to the papillomaviridae E6 protein family. In terms of assembly, forms homodimers. Interacts with ubiquitin-protein ligase UBE3A/E6-AP; this interaction stimulates UBE3A ubiquitin activity. Interacts with host BAK1.

It is found in the host cytoplasm. The protein localises to the host nucleus. Functionally, plays a major role in the induction and maintenance of cellular transformation. E6 associates with host UBE3A/E6-AP ubiquitin-protein ligase and modulates its activity. Protects host keratinocytes from apoptosis by mediating the degradation of host BAK1. May also inhibit host immune response. The chain is Protein E6 from Sylvilagus floridanus (Cottontail rabbit).